The following is a 446-amino-acid chain: Ubiquitin carboxyl-terminal hydrolase MINDY-3 (446 aa).

C51 functions as the Nucleophile in the catalytic mechanism. The segment covering D117–P128 has biased composition (basic and acidic residues). A disordered region spans residues D117–P137. H288 acts as the Proton acceptor in catalysis.

Belongs to the MINDY deubiquitinase family. FAM188 subfamily.

It is found in the nucleus. It catalyses the reaction Thiol-dependent hydrolysis of ester, thioester, amide, peptide and isopeptide bonds formed by the C-terminal Gly of ubiquitin (a 76-residue protein attached to proteins as an intracellular targeting signal).. Hydrolase that can remove 'Lys-48'-linked conjugated ubiquitin from proteins. The polypeptide is Ubiquitin carboxyl-terminal hydrolase MINDY-3 (mindy3) (Danio rerio (Zebrafish)).